A 231-amino-acid chain; its full sequence is UPF0702 transmembrane protein YetF (231 aa).

3 helical membrane passes run 5-25 (LSVAVELVCGLGILFIILKLL), 33-53 (ITPFDFISALILGELVGNAVY), and 59-79 (IKEIIFASLLWGVLIYIIEFI).

It belongs to the UPF0702 family.

It localises to the cell membrane. This chain is UPF0702 transmembrane protein YetF (yetF), found in Bacillus subtilis (strain 168).